The primary structure comprises 288 residues: Probable sulfate transport system permease protein cysT (288 aa).

A run of 7 helical transmembrane segments spans residues 4–23 (LIFI…IRFL), 29–49 (VLAL…FILL), 79–99 (TAFL…WILV), 111–131 (AIVD…LMTV), 149–169 (IVFS…PFVV), 227–247 (SIVL…VLIF), and 257–277 (GAIV…LIIN). The region spanning 73-276 (YATTFSTAFL…IASFGGLLII (204 aa)) is the ABC transmembrane type-1 domain.

The protein belongs to the binding-protein-dependent transport system permease family. CysTW subfamily.

The protein localises to the plastid. Its subcellular location is the chloroplast membrane. Functionally, part of the ABC transporter complex cysAWTP (TC 3.A.1.6.1) involved in sulfate/thiosulfate import. Probably responsible for the translocation of the substrate across the membrane. This is Probable sulfate transport system permease protein cysT (cysT) from Anthoceros angustus (Hornwort).